Here is a 577-residue protein sequence, read N- to C-terminus: Sensor protein ChvG (577 aa).

At 1–29 (MRGQRRWAHPFTLIRRLFGNAVFSSLTRR) the chain is on the cytoplasmic side. Residues 30-50 (IVFFNLVALVVLVGGIMYLNQ) form a helical membrane-spanning segment. Residues 51–260 (FREGLIDARV…DIDKIVHAER (210 aa)) are Periplasmic-facing. Residues 261-281 (LAIIRVFGVAALVNVILSLLL) traverse the membrane as a helical segment. The Cytoplasmic segment spans residues 282–577 (SSTIANPLRR…VLSLPAGPHP (296 aa)). The HAMP domain occupies 283–339 (STIANPLRRLSAAAIRVRRGGAKEREEIPDFSSRQDEIGNLSVALREMTTALYDRIA). Residues 347–575 (DVSHELKNPL…RFVLSLPAGP (229 aa)) form the Histidine kinase domain. At His350 the chain carries Phosphohistidine.

In terms of assembly, homodimer.

It is found in the cell inner membrane. The enzyme catalyses ATP + protein L-histidine = ADP + protein N-phospho-L-histidine.. It functions in the pathway glycan metabolism; exopolysaccharide biosynthesis. Functionally, member of a two-component regulatory system ChvG(ExoS)/ChvI involved in regulating the production of succinoglycan. Activates ChvI by phosphorylation. This Rhizobium meliloti (strain 1021) (Ensifer meliloti) protein is Sensor protein ChvG (chvG).